The following is a 327-amino-acid chain: MFNDIPVFDYEDIQLIPNKCIISSRSQADTSVKLGNYTFKLPVIPANMQTIIDEEVAETLACEGYFYIMHRFNEEARRPFIKRMHDKGLIASISVGVKDYEYDFVTSLKEDAPEFITIDIAHGHSNSVIEMIQHIKQELPETFVIAGNVGTPEAVRELENAGADATKVGIGPGKVCITKVKTGFGTGGWQLAALRWCSKAARKPIIADGGIRTHGDIAKSIRFGASMVMIGSLFAGHLESPGKLVEVDGQQFKEYYGSASEYQKGEHKNVEGKKILLPVKGRLEDTLTEMQQDLQSSISYAGGKELDSLRHVDYVIVKNSIWNGDSI.

C176 acts as the Thioimidate intermediate in catalysis. An NADP(+)-binding site is contributed by 205 to 228; it reads IIADGGIRTHGDIAKSIRFGASMV.

It belongs to the IMPDH/GMPR family. GuaC type 2 subfamily.

It catalyses the reaction IMP + NH4(+) + NADP(+) = GMP + NADPH + 2 H(+). Catalyzes the irreversible NADPH-dependent deamination of GMP to IMP. It functions in the conversion of nucleobase, nucleoside and nucleotide derivatives of G to A nucleotides, and in maintaining the intracellular balance of A and G nucleotides. The chain is GMP reductase from Streptococcus agalactiae serotype Ia (strain ATCC 27591 / A909 / CDC SS700).